Reading from the N-terminus, the 406-residue chain is S-adenosylmethionine synthase (406 aa).

H16 contributes to the ATP binding site. D18 provides a ligand contact to Mg(2+). E44 is a K(+) binding site. L-methionine is bound by residues E57 and Q100. A flexible loop region spans residues Q100 to R110. ATP contacts are provided by residues D165–K167, D241, R247–K248, A264, and K268. Position 241 (D241) interacts with L-methionine. An L-methionine-binding site is contributed by K272.

This sequence belongs to the AdoMet synthase family. In terms of assembly, homotetramer; dimer of dimers. Requires Mg(2+) as cofactor. The cofactor is K(+).

The protein localises to the cytoplasm. The catalysed reaction is L-methionine + ATP + H2O = S-adenosyl-L-methionine + phosphate + diphosphate. Its pathway is amino-acid biosynthesis; S-adenosyl-L-methionine biosynthesis; S-adenosyl-L-methionine from L-methionine: step 1/1. Its function is as follows. Catalyzes the formation of S-adenosylmethionine (AdoMet) from methionine and ATP. The overall synthetic reaction is composed of two sequential steps, AdoMet formation and the subsequent tripolyphosphate hydrolysis which occurs prior to release of AdoMet from the enzyme. This Chromohalobacter salexigens (strain ATCC BAA-138 / DSM 3043 / CIP 106854 / NCIMB 13768 / 1H11) protein is S-adenosylmethionine synthase.